The following is a 224-amino-acid chain: Cytochrome c biogenesis ATP-binding export protein CcmA (224 aa).

Residues 1–220 enclose the ABC transporter domain; sequence MQNAEAAPAL…EYAHAEVVGA (220 aa). 40–47 is a binding site for ATP; it reads GANGSGKT.

It belongs to the ABC transporter superfamily. CcmA exporter (TC 3.A.1.107) family. In terms of assembly, the complex is composed of two ATP-binding proteins (CcmA) and two transmembrane proteins (CcmB).

Its subcellular location is the cell inner membrane. The enzyme catalyses heme b(in) + ATP + H2O = heme b(out) + ADP + phosphate + H(+). Part of the ABC transporter complex CcmAB involved in the biogenesis of c-type cytochromes; once thought to export heme, this seems not to be the case, but its exact role is uncertain. Responsible for energy coupling to the transport system. In Bordetella parapertussis (strain 12822 / ATCC BAA-587 / NCTC 13253), this protein is Cytochrome c biogenesis ATP-binding export protein CcmA.